Reading from the N-terminus, the 362-residue chain is UPF0283 membrane protein Arad_2632 (362 aa).

Residues 1–11 (MTKPTEDDPKG) are compositionally biased toward basic and acidic residues. The disordered stretch occupies residues 1-47 (MTKPTEDDPKGISRRPAAFSLEQEASREGAHTKTTAETPRRKPQSFD). The next 2 helical transmembrane spans lie at 82–102 (FSFG…AFGL) and 118–138 (LGYT…AIVV).

The protein belongs to the UPF0283 family.

The protein localises to the cell inner membrane. In Rhizobium rhizogenes (strain K84 / ATCC BAA-868) (Agrobacterium radiobacter), this protein is UPF0283 membrane protein Arad_2632.